The chain runs to 96 residues: Co-chaperonin GroES (96 aa).

Belongs to the GroES chaperonin family. Heptamer of 7 subunits arranged in a ring. Interacts with the chaperonin GroEL.

The protein resides in the cytoplasm. Together with the chaperonin GroEL, plays an essential role in assisting protein folding. The GroEL-GroES system forms a nano-cage that allows encapsulation of the non-native substrate proteins and provides a physical environment optimized to promote and accelerate protein folding. GroES binds to the apical surface of the GroEL ring, thereby capping the opening of the GroEL channel. This chain is Co-chaperonin GroES, found in Legionella pneumophila (strain Paris).